Here is a 125-residue protein sequence, read N- to C-terminus: Large ribosomal subunit protein uL18 (125 aa).

N-acetylglycine is present on Gly2. N6-acetyllysine is present on residues Lys5 and Lys48.

This sequence belongs to the universal ribosomal protein uL18 family. As to quaternary structure, component of the large ribosomal subunit (LSU). Part of the 5S RNP complex, which is a LSU subcomplex composed of the 5S RNA, RPL5 and RPL11. Component of a hexameric 5S RNP precursor complex, composed of 5S RNA, RRS1, RPF2/BXDC1, RPL5, RPL11 and HEATR3; this complex acts as a precursor for ribosome assembly. Interacts with NVL in an ATP-dependent manner. Interacts with RRP1B. Interacts with IPO5, IPO7 and KPNB1; these interactions may be involved in RPL5 nuclear import for the assembly of ribosomal subunits. Interacts with RRP1B.

It localises to the cytoplasm. Its subcellular location is the nucleus. The protein localises to the nucleolus. Functionally, component of the ribosome, a large ribonucleoprotein complex responsible for the synthesis of proteins in the cell. The small ribosomal subunit (SSU) binds messenger RNAs (mRNAs) and translates the encoded message by selecting cognate aminoacyl-transfer RNA (tRNA) molecules. The large subunit (LSU) contains the ribosomal catalytic site termed the peptidyl transferase center (PTC), which catalyzes the formation of peptide bonds, thereby polymerizing the amino acids delivered by tRNAs into a polypeptide chain. The nascent polypeptides leave the ribosome through a tunnel in the LSU and interact with protein factors that function in enzymatic processing, targeting, and the membrane insertion of nascent chains at the exit of the ribosomal tunnel. As part of the 5S RNP/5S ribonucleoprotein particle it is an essential component of the LSU, required for its formation and the maturation of rRNAs. It also couples ribosome biogenesis to p53/TP53 activation. As part of the 5S RNP it accumulates in the nucleoplasm and inhibits MDM2, when ribosome biogenesis is perturbed, mediating the stabilization and the activation of TP53. The protein is Large ribosomal subunit protein uL18 (RPL5) of Sus scrofa (Pig).